The primary structure comprises 360 residues: 3-isopropylmalate dehydrogenase (360 aa).

76 to 89 (GPKWDTIERDIRPE) contacts NAD(+). The substrate site is built by Arg96, Arg106, Arg134, and Asp224. Residues Asp224, Asp248, and Asp252 each coordinate Mg(2+). 282 to 294 (GSAPDIAGQGIAN) provides a ligand contact to NAD(+).

It belongs to the isocitrate and isopropylmalate dehydrogenases family. LeuB type 1 subfamily. In terms of assembly, homodimer. Mg(2+) serves as cofactor. Requires Mn(2+) as cofactor.

It localises to the cytoplasm. The enzyme catalyses (2R,3S)-3-isopropylmalate + NAD(+) = 4-methyl-2-oxopentanoate + CO2 + NADH. It participates in amino-acid biosynthesis; L-leucine biosynthesis; L-leucine from 3-methyl-2-oxobutanoate: step 3/4. In terms of biological role, catalyzes the oxidation of 3-carboxy-2-hydroxy-4-methylpentanoate (3-isopropylmalate) to 3-carboxy-4-methyl-2-oxopentanoate. The product decarboxylates to 4-methyl-2 oxopentanoate. The protein is 3-isopropylmalate dehydrogenase of Pseudomonas syringae pv. tomato (strain ATCC BAA-871 / DC3000).